Consider the following 808-residue polypeptide: Ribosome biogenesis protein BOP1 homolog (808 aa).

2 stretches are compositionally biased toward low complexity: residues 1–25 (MTSP…LTPC) and 33–50 (ATSS…SSFD). A disordered region spans residues 1–55 (MTSPKGKPSPKRSAPAPATAALTPCAEERTEGATSSASASASSHISSSFDSPRDD). WD repeat units lie at residues 430–469 (GHTA…LMKR), 640–680 (KFSE…RRFK), 682–720 (SGGV…KPYK), 724–766 (SHKG…DYNK), and 777–808 (KHQR…AWTE).

The protein belongs to the WD repeat BOP1/ERB1 family.

The protein localises to the nucleus. Its subcellular location is the nucleolus. It is found in the nucleoplasm. Its function is as follows. Required for maturation of ribosomal RNAs and formation of the large ribosomal subunit. The polypeptide is Ribosome biogenesis protein BOP1 homolog (Leishmania major).